We begin with the raw amino-acid sequence, 61 residues long: Large ribosomal subunit protein bL28 (61 aa).

The tract at residues Met-1–Ser-27 is disordered. Residues Lys-9 to Ser-27 show a composition bias toward polar residues.

This sequence belongs to the bacterial ribosomal protein bL28 family.

The chain is Large ribosomal subunit protein bL28 from Lactobacillus delbrueckii subsp. bulgaricus (strain ATCC 11842 / DSM 20081 / BCRC 10696 / JCM 1002 / NBRC 13953 / NCIMB 11778 / NCTC 12712 / WDCM 00102 / Lb 14).